A 95-amino-acid chain; its full sequence is Co-chaperonin GroES (95 aa).

Belongs to the GroES chaperonin family. As to quaternary structure, heptamer of 7 subunits arranged in a ring. Interacts with the chaperonin GroEL.

It localises to the cytoplasm. In terms of biological role, together with the chaperonin GroEL, plays an essential role in assisting protein folding. The GroEL-GroES system forms a nano-cage that allows encapsulation of the non-native substrate proteins and provides a physical environment optimized to promote and accelerate protein folding. GroES binds to the apical surface of the GroEL ring, thereby capping the opening of the GroEL channel. This Francisella philomiragia subsp. philomiragia (strain ATCC 25017 / CCUG 19701 / FSC 153 / O#319-036) protein is Co-chaperonin GroES.